Consider the following 258-residue polypeptide: GTP cyclohydrolase FolE2 (258 aa).

This sequence belongs to the GTP cyclohydrolase IV family.

It carries out the reaction GTP + H2O = 7,8-dihydroneopterin 3'-triphosphate + formate + H(+). The protein operates within cofactor biosynthesis; 7,8-dihydroneopterin triphosphate biosynthesis; 7,8-dihydroneopterin triphosphate from GTP: step 1/1. In terms of biological role, converts GTP to 7,8-dihydroneopterin triphosphate. This chain is GTP cyclohydrolase FolE2, found in Geobacter sulfurreducens (strain ATCC 51573 / DSM 12127 / PCA).